The following is a 668-amino-acid chain: Metastasis-associated protein MTA2 (668 aa).

A BAH domain is found at Met-1–Gln-144. 2 positions are modified to phosphoserine: Ser-52 and Ser-54. Residues Gly-145–Gly-256 enclose the ELM2 domain. The residue at position 152 (Lys-152) is an N6-acetyllysine. In terms of domain architecture, SANT spans Asp-263 to Arg-315. The GATA-type; atypical zinc-finger motif lies at Cys-367–Cys-394. Residues Gln-409–Glu-419 are compositionally biased toward polar residues. The disordered stretch occupies residues Gln-409 to Tyr-437. Residues Ser-433 and Ser-435 each carry the phosphoserine modification. Lys-460 is subject to N6-acetyllysine. Lys-492 participates in a covalent cross-link: Glycyl lysine isopeptide (Lys-Gly) (interchain with G-Cter in SUMO2 and SUMO3); alternate. Lys-492 is covalently cross-linked (Glycyl lysine isopeptide (Lys-Gly) (interchain with G-Cter in SUMO2); alternate). Residue Lys-508 forms a Glycyl lysine isopeptide (Lys-Gly) (interchain with G-Cter in SUMO2) linkage. N6-acetyllysine is present on residues Lys-522 and Lys-531. Thr-534 carries the post-translational modification Phosphothreonine. Ser-548 is modified (phosphoserine). Residues Lys-559 and Lys-595 each participate in a glycyl lysine isopeptide (Lys-Gly) (interchain with G-Cter in SUMO2) cross-link. Disordered stretches follow at residues Ala-580–Ala-599 and Pro-647–Asp-668.

Belongs to the metastasis-associated protein family. Component of the nucleosome remodeling and deacetylase (NuRD) repressor complex, composed of core proteins MTA1, MTA2, MTA3, RBBP4, RBBP7, HDAC1, HDAC2, MBD2, MBD3, and peripherally associated proteins CDK2AP1, CDK2AP2, GATAD2A, GATAD2B, CHD3, CHD4 and CHD5. The exact stoichiometry of the NuRD complex is unknown, and some subunits such as MBD2 and MBD3, GATAD2A and GATAD2B, and CHD3, CHD4 and CHD5 define mutually exclusive NuRD complexes. Interacts with CHD3. Interacts with CHD4. Interacts with GATAD2A. Interacts with HDAC7. Interacts with MBD3. Interacts with p53/TP53. Interacts with MINT. Interacts with PIMREG. Interacts with NACC2. Interacts with ERCC6. Interacts with PWWP2B. Interacts with transcription factor BCL11A. As to expression, widely expressed.

The protein localises to the nucleus. In terms of biological role, may function as a transcriptional coregulator. Acts as a component of the histone deacetylase NuRD complex which participates in the remodeling of chromatin. This chain is Metastasis-associated protein MTA2 (MTA2), found in Homo sapiens (Human).